We begin with the raw amino-acid sequence, 226 residues long: Chalcone--flavanone isomerase (226 aa).

Substrate contacts are provided by Thr-47, Asn-112, and Ser-189.

It belongs to the chalcone isomerase family.

The enzyme catalyses a chalcone = a flavanone.. It participates in secondary metabolite biosynthesis; flavonoid biosynthesis. Catalyzes the intramolecular cyclization of bicyclic chalcones into tricyclic (S)-flavanones. Responsible for the isomerization of 4,2',4',6'-tetrahydroxychalcone (also termed chalcone) into naringenin. The polypeptide is Chalcone--flavanone isomerase (CHI) (Allium cepa (Onion)).